The primary structure comprises 426 residues: Serine--tRNA ligase (426 aa).

Residue Thr-235 to Glu-237 coordinates L-serine. Arg-266–Glu-268 lines the ATP pocket. L-serine is bound at residue Glu-289. Position 353–356 (Glu-353–Ser-356) interacts with ATP. An L-serine-binding site is contributed by Ser-389.

Belongs to the class-II aminoacyl-tRNA synthetase family. Type-1 seryl-tRNA synthetase subfamily. Homodimer. The tRNA molecule binds across the dimer.

The protein resides in the cytoplasm. It carries out the reaction tRNA(Ser) + L-serine + ATP = L-seryl-tRNA(Ser) + AMP + diphosphate + H(+). The catalysed reaction is tRNA(Sec) + L-serine + ATP = L-seryl-tRNA(Sec) + AMP + diphosphate + H(+). Its pathway is aminoacyl-tRNA biosynthesis; selenocysteinyl-tRNA(Sec) biosynthesis; L-seryl-tRNA(Sec) from L-serine and tRNA(Sec): step 1/1. In terms of biological role, catalyzes the attachment of serine to tRNA(Ser). Is also able to aminoacylate tRNA(Sec) with serine, to form the misacylated tRNA L-seryl-tRNA(Sec), which will be further converted into selenocysteinyl-tRNA(Sec). In Nostoc sp. (strain PCC 7120 / SAG 25.82 / UTEX 2576), this protein is Serine--tRNA ligase.